A 539-amino-acid chain; its full sequence is Chaperonin GroEL (539 aa).

ATP contacts are provided by residues 30-33 (TLGP), 87-91 (DGTTT), G414, 479-481 (DAL), and D495.

It belongs to the chaperonin (HSP60) family. Forms a cylinder of 14 subunits composed of two heptameric rings stacked back-to-back. Interacts with the co-chaperonin GroES.

Its subcellular location is the cytoplasm. The catalysed reaction is ATP + H2O + a folded polypeptide = ADP + phosphate + an unfolded polypeptide.. Functionally, together with its co-chaperonin GroES, plays an essential role in assisting protein folding. The GroEL-GroES system forms a nano-cage that allows encapsulation of the non-native substrate proteins and provides a physical environment optimized to promote and accelerate protein folding. The polypeptide is Chaperonin GroEL (Caldicellulosiruptor bescii (strain ATCC BAA-1888 / DSM 6725 / KCTC 15123 / Z-1320) (Anaerocellum thermophilum)).